The following is a 241-amino-acid chain: Glucosamine-6-phosphate deaminase (241 aa).

D67 functions as the Proton acceptor; for enolization step in the catalytic mechanism. N136 serves as the catalytic For ring-opening step. Catalysis depends on H138, which acts as the Proton acceptor; for ring-opening step. E143 (for ring-opening step) is an active-site residue.

Belongs to the glucosamine/galactosamine-6-phosphate isomerase family. NagB subfamily.

The catalysed reaction is alpha-D-glucosamine 6-phosphate + H2O = beta-D-fructose 6-phosphate + NH4(+). It participates in amino-sugar metabolism; N-acetylneuraminate degradation; D-fructose 6-phosphate from N-acetylneuraminate: step 5/5. In terms of biological role, catalyzes the reversible isomerization-deamination of glucosamine 6-phosphate (GlcN6P) to form fructose 6-phosphate (Fru6P) and ammonium ion. The sequence is that of Glucosamine-6-phosphate deaminase from Clostridium novyi (strain NT).